We begin with the raw amino-acid sequence, 465 residues long: Argininosuccinate lyase (465 aa).

This sequence belongs to the lyase 1 family. Argininosuccinate lyase subfamily.

It localises to the cytoplasm. It carries out the reaction 2-(N(omega)-L-arginino)succinate = fumarate + L-arginine. It participates in amino-acid biosynthesis; L-arginine biosynthesis; L-arginine from L-ornithine and carbamoyl phosphate: step 3/3. The protein is Argininosuccinate lyase of Hyphomonas neptunium (strain ATCC 15444).